Here is a 218-residue protein sequence, read N- to C-terminus: Cytidylate kinase (218 aa).

An ATP-binding site is contributed by 11-19 (GPGASGKGT).

This sequence belongs to the cytidylate kinase family. Type 1 subfamily.

Its subcellular location is the cytoplasm. It carries out the reaction CMP + ATP = CDP + ADP. The catalysed reaction is dCMP + ATP = dCDP + ADP. The protein is Cytidylate kinase of Neisseria meningitidis serogroup A / serotype 4A (strain DSM 15465 / Z2491).